Here is a 59-residue protein sequence, read N- to C-terminus: MKFSSIILLTLLICSMSKFGNCQVETNVKCQGGSCASVCRKAIGVAAGKCINGRCVCYP.

The signal sequence occupies residues 1–22 (MKFSSIILLTLLICSMSKFGNC). Q23 carries the post-translational modification Pyrrolidone carboxylic acid. 3 disulfides stabilise this stretch: C30–C50, C35–C55, and C39–C57.

This sequence belongs to the short scorpion toxin superfamily. Potassium channel inhibitor family. Alpha-KTx 15 subfamily. As to expression, expressed by the venom gland.

The protein localises to the secreted. Its function is as follows. Blocks both human ERG1/Kv11.1/KCNH2 potassium channels (in a reversible manner) and A-type voltage-gated potassium channels Kv4/KCND (in an irreversible manner). The presence of the Kv4-associated proteins DPP6 or DPP10 is mandatory to have high-affinity blockade of Kv4.2/KCND2 and Kv4.3/KCND3 channels. In contrast, the presence of the Kv4-associated protein KChIP1/KCNIP1 does not enhance the affinity blockade. May dispose of two functional faces (A and B); the two basic residues (Arg-40 and Lys-41) on the alpha-helix side of the peptide that blocks the hERG current (face A) and the typical dyad through which it blocks A-type currents on the beta-sheet side (face B). In adult rat brain, it binds to sites in the striatum, hippocampus, superior colliculus, and cerebellum. It shares the same target in rat brain than AaTX1 (AC Q867F4) and AmmTX3 (AC P60208). In DPP6 knockout mice, A-type currents are much less affected by the toxin than in wild-type mice. The chain is Potassium channel toxin alpha-KTx 15.2 from Olivierus martensii (Manchurian scorpion).